A 157-amino-acid chain; its full sequence is Lipoprotein signal peptidase (157 aa).

4 helical membrane passes run 10–30 (FIFI…KYAI), 36–56 (YESS…FSLL), 58–78 (FLEG…FIFL), and 84–104 (LFKA…SNIL). Catalysis depends on residues aspartate 114 and aspartate 131. The chain crosses the membrane as a helical span at residues 123 to 143 (DFAIFNFADVMIDVGVGVLLI).

This sequence belongs to the peptidase A8 family.

It is found in the cell inner membrane. It carries out the reaction Release of signal peptides from bacterial membrane prolipoproteins. Hydrolyzes -Xaa-Yaa-Zaa-|-(S,diacylglyceryl)Cys-, in which Xaa is hydrophobic (preferably Leu), and Yaa (Ala or Ser) and Zaa (Gly or Ala) have small, neutral side chains.. The protein operates within protein modification; lipoprotein biosynthesis (signal peptide cleavage). In terms of biological role, this protein specifically catalyzes the removal of signal peptides from prolipoproteins. This chain is Lipoprotein signal peptidase, found in Helicobacter acinonychis (strain Sheeba).